Reading from the N-terminus, the 204-residue chain is Dephospho-CoA kinase (204 aa).

Positions 12–204 (RIGVTGGIAS…AWRDQISSIC (193 aa)) constitute a DPCK domain. 20 to 25 (ASGKSS) contributes to the ATP binding site.

It belongs to the CoaE family.

The protein resides in the cytoplasm. It carries out the reaction 3'-dephospho-CoA + ATP = ADP + CoA + H(+). The protein operates within cofactor biosynthesis; coenzyme A biosynthesis; CoA from (R)-pantothenate: step 5/5. Catalyzes the phosphorylation of the 3'-hydroxyl group of dephosphocoenzyme A to form coenzyme A. This Prochlorococcus marinus (strain MIT 9313) protein is Dephospho-CoA kinase.